A 284-amino-acid chain; its full sequence is Adenylate kinase 1, chloroplastic (284 aa).

The N-terminal 36 residues, 1 to 36 (MARLVRVARSSSLFGFGNRFYSTSAEASHASSPSPF), are a transit peptide targeting the chloroplast. 61–66 (GVGKGT) contributes to the ATP binding site. Residues 81 to 110 (ATGDLVREELASSGPLSQKLSEIVNQGKLV) are NMP. AMP contacts are provided by residues Thr-82, Arg-87, 108–110 (KLV), 138–141 (GFPR), and Gln-145. The tract at residues 174–222 (GRRTCSQCGKGFNVAHINLKGENGRPGISMDPLLPPHQCMSKLVTRADD) is LID. Arg-175 is an ATP binding site. Positions 219 and 230 each coordinate AMP. ATP is bound at residue Gly-258.

The protein belongs to the adenylate kinase family. As to quaternary structure, monomer. As to expression, highly expressed in flowers and at lower levels in roots, leaves and stems.

The protein localises to the plastid. The protein resides in the chloroplast stroma. The enzyme catalyses AMP + ATP = 2 ADP. Its function is as follows. Catalyzes the reversible transfer of the terminal phosphate group between ATP and AMP. Plays an important role in cellular energy homeostasis, adenine nucleotide metabolism and plant growth. This chain is Adenylate kinase 1, chloroplastic (ADK), found in Arabidopsis thaliana (Mouse-ear cress).